The primary structure comprises 300 residues: U6 snRNA methylphosphate capping enzyme Amus (300 aa).

Over residues 1-12 (MDLENNNNTPLT) the composition is skewed to polar residues. Disordered stretches follow at residues 1-21 (MDLENNNNTPLTGKQAEKCAK) and 34-68 (VESKRLKKEESNVEATSRPPAQSPKKRLHLNGKPM). Positions 34 to 44 (VESKRLKKEES) are enriched in basic and acidic residues. Residues 95-300 (DIRLDVLGTQ…KRPIQIFTKS (206 aa)) form the Bin3-type SAM domain. Residues asparagine 119 and aspartate 140 each coordinate S-adenosyl-L-methionine.

Belongs to the methyltransferase superfamily.

Its subcellular location is the nucleus. Functionally, probable S-adenosyl-L-methionine-dependent methyltransferase that binds and stabilizes U6 snRNA, probably by adding a methylphosphate cap at its 5'-end. Required for U6 stability, but not stability of 7SK snRNAs, other miRNAs or tRNAs. U6 stabilization is required for efficient pre-mRNA splicing. Essential for organismal and germline development. In Drosophila melanogaster (Fruit fly), this protein is U6 snRNA methylphosphate capping enzyme Amus.